The chain runs to 523 residues: NAD(P)H-quinone oxidoreductase subunit 2 (523 aa).

The next 14 helical transmembrane spans lie at 29–49 (AIAP…VDLA), 57–77 (WVPP…AQQW), 94–114 (LAIS…LISW), 123–143 (PIGE…LLCG), 147–167 (LVSV…LAGY), 182–202 (LLVG…LYGL), 223–243 (AALS…AVPF), 255–275 (PTPV…ALAL), 291–311 (LLFT…ALAQ), 317–337 (MLAY…VCGT), 345–365 (VLYM…IILF), 389–409 (LGLS…GFFG), 424–444 (LLVV…ISVI), and 477–497 (IALV…NPLF).

This sequence belongs to the complex I subunit 2 family. NDH-1 can be composed of about 15 different subunits; different subcomplexes with different compositions have been identified which probably have different functions.

The protein localises to the cellular thylakoid membrane. It carries out the reaction a plastoquinone + NADH + (n+1) H(+)(in) = a plastoquinol + NAD(+) + n H(+)(out). The catalysed reaction is a plastoquinone + NADPH + (n+1) H(+)(in) = a plastoquinol + NADP(+) + n H(+)(out). Functionally, NDH-1 shuttles electrons from an unknown electron donor, via FMN and iron-sulfur (Fe-S) centers, to quinones in the respiratory and/or the photosynthetic chain. The immediate electron acceptor for the enzyme in this species is believed to be plastoquinone. Couples the redox reaction to proton translocation, and thus conserves the redox energy in a proton gradient. Cyanobacterial NDH-1 also plays a role in inorganic carbon-concentration. The polypeptide is NAD(P)H-quinone oxidoreductase subunit 2 (Prochlorococcus marinus (strain MIT 9313)).